Here is a 222-residue protein sequence, read N- to C-terminus: Large ribosomal subunit protein uL4 (222 aa).

The protein belongs to the universal ribosomal protein uL4 family. Part of the 50S ribosomal subunit.

One of the primary rRNA binding proteins, this protein initially binds near the 5'-end of the 23S rRNA. It is important during the early stages of 50S assembly. It makes multiple contacts with different domains of the 23S rRNA in the assembled 50S subunit and ribosome. In terms of biological role, forms part of the polypeptide exit tunnel. In Chlamydia trachomatis serovar L2 (strain ATCC VR-902B / DSM 19102 / 434/Bu), this protein is Large ribosomal subunit protein uL4.